A 396-amino-acid polypeptide reads, in one-letter code: Phosphoglycerate kinase (396 aa).

Substrate contacts are provided by residues 21-23 (DFN), R36, 59-62 (HLGK), R119, and R156. ATP contacts are provided by residues K206, E325, and 352–355 (GGDS).

Belongs to the phosphoglycerate kinase family. In terms of assembly, monomer.

The protein resides in the cytoplasm. The catalysed reaction is (2R)-3-phosphoglycerate + ATP = (2R)-3-phospho-glyceroyl phosphate + ADP. It participates in carbohydrate degradation; glycolysis; pyruvate from D-glyceraldehyde 3-phosphate: step 2/5. This Staphylococcus haemolyticus (strain JCSC1435) protein is Phosphoglycerate kinase.